The chain runs to 306 residues: tRNA dimethylallyltransferase (306 aa).

9–16 (GPTAVGKT) provides a ligand contact to ATP. 11-16 (TAVGKT) serves as a coordination point for substrate. Residues 34-37 (DSRQ) are interaction with substrate tRNA.

The protein belongs to the IPP transferase family. In terms of assembly, monomer. The cofactor is Mg(2+).

The catalysed reaction is adenosine(37) in tRNA + dimethylallyl diphosphate = N(6)-dimethylallyladenosine(37) in tRNA + diphosphate. Functionally, catalyzes the transfer of a dimethylallyl group onto the adenine at position 37 in tRNAs that read codons beginning with uridine, leading to the formation of N6-(dimethylallyl)adenosine (i(6)A). The sequence is that of tRNA dimethylallyltransferase from Roseiflexus castenholzii (strain DSM 13941 / HLO8).